The primary structure comprises 285 residues: Protease HtpX homolog (285 aa).

2 helical membrane passes run 7–27 (TAML…MIGG) and 30–50 (GMTI…WFSD). Histidine 131 provides a ligand contact to Zn(2+). The active site involves glutamate 132. Histidine 135 is a Zn(2+) binding site. A run of 2 helical transmembrane segments spans residues 146-166 (ITAT…FFGG) and 177-197 (IAGI…QMAI). Residue glutamate 202 coordinates Zn(2+).

This sequence belongs to the peptidase M48B family. Zn(2+) serves as cofactor.

The protein resides in the cell inner membrane. The sequence is that of Protease HtpX homolog from Burkholderia cenocepacia (strain ATCC BAA-245 / DSM 16553 / LMG 16656 / NCTC 13227 / J2315 / CF5610) (Burkholderia cepacia (strain J2315)).